A 266-amino-acid polypeptide reads, in one-letter code: Undecaprenyl-diphosphatase (266 aa).

The next 8 membrane-spanning stretches (helical) occupy residues 1-21 (MVVI…SSTG), 43-63 (FLII…WKDI), 81-101 (LKII…DDII), 109-129 (VLIV…IEVV), 159-179 (LAMI…LLLG), 183-203 (PLAA…ATAL), 219-239 (YLAL…KWFM), and 246-266 (SFAS…VLLY).

This sequence belongs to the UppP family.

It localises to the cell inner membrane. The enzyme catalyses di-trans,octa-cis-undecaprenyl diphosphate + H2O = di-trans,octa-cis-undecaprenyl phosphate + phosphate + H(+). Its function is as follows. Catalyzes the dephosphorylation of undecaprenyl diphosphate (UPP). Confers resistance to bacitracin. The sequence is that of Undecaprenyl-diphosphatase from Fusobacterium nucleatum subsp. nucleatum (strain ATCC 25586 / DSM 15643 / BCRC 10681 / CIP 101130 / JCM 8532 / KCTC 2640 / LMG 13131 / VPI 4355).